Consider the following 185-residue polypeptide: Ribosome-recycling factor (185 aa).

The protein belongs to the RRF family.

It localises to the cytoplasm. Its function is as follows. Responsible for the release of ribosomes from messenger RNA at the termination of protein biosynthesis. May increase the efficiency of translation by recycling ribosomes from one round of translation to another. This Streptococcus thermophilus (strain ATCC BAA-491 / LMD-9) protein is Ribosome-recycling factor.